The following is a 668-amino-acid chain: mRNA cap guanine-N(7) methyltransferase (668 aa).

Residues 1-19 (MYDPARDSWEERDGDEARS) show a composition bias toward basic and acidic residues. Residues 1–281 (MYDPARDSWE…RAQVEEAMRA (281 aa)) form a disordered region. A compositionally biased stretch (polar residues) spans 44 to 65 (GENNNTTDLQQHPDPSSKTTAS). The span at 73-88 (SQPAQPTTQTPPSVST) shows a compositional bias: low complexity. Polar residues predominate over residues 100 to 129 (KASNPQSLTSTAQNQLNKSNTTMENTSGSA). The segment covering 133–142 (PRADPSDKPN) has biased composition (basic and acidic residues). Residues 148–157 (ASPTDQNGSQ) show a composition bias toward polar residues. A compositionally biased stretch (basic and acidic residues) spans 257-279 (LVDRETLRRRQEERERAQVEEAM). Residues 310-668 (SKIKGLRSFN…FYHAFCFYKV (359 aa)) form the mRNA cap 0 methyltransferase domain. Position 319 to 320 (319 to 320 (NN)) interacts with mRNA. Residues K323, G366, D390, D428, 471–473 (MFT), and Y476 each bind S-adenosyl-L-methionine. The segment at 524 to 547 (ARQAQAKKEKSDEAPEDGEVEEDD) is disordered. Positions 537-547 (APEDGEVEEDD) are enriched in acidic residues.

Belongs to the class I-like SAM-binding methyltransferase superfamily. mRNA cap 0 methyltransferase family.

The protein localises to the nucleus. The catalysed reaction is a 5'-end (5'-triphosphoguanosine)-ribonucleoside in mRNA + S-adenosyl-L-methionine = a 5'-end (N(7)-methyl 5'-triphosphoguanosine)-ribonucleoside in mRNA + S-adenosyl-L-homocysteine. In terms of biological role, responsible for methylating the 5'-cap structure of mRNAs. The chain is mRNA cap guanine-N(7) methyltransferase (abd1) from Aspergillus fumigatus (strain ATCC MYA-4609 / CBS 101355 / FGSC A1100 / Af293) (Neosartorya fumigata).